A 442-amino-acid chain; its full sequence is Threonine/serine transporter TdcC (442 aa).

Transmembrane regions (helical) follow at residues 21–41 (TTWTLGLFGTAIGAGVLFFPI), 44–64 (GFGGLIPILIMLVLAYPIAFL), 96–116 (GVVITFLYFFAICPLLWIYGV), 139–159 (VVALALLLLMAVVIYFGKDLM), 162–182 (VMSFLVFPFIACLVLISLSLI), 206–226 (ILVTVWLGISIMVFSFNFSPI), 258–278 (ASILMVAVVMFFAFSCLFTLS), 312–332 (ITLEYAASLIALVAIFKSFFG), 364–384 (LISMFFIMGSTWLVAYINPNI), 388–408 (IEAMGAPIIASLLCLLPMYAI), and 422–442 (ENYFVTIVGLLTIFNIVYKLL).

Belongs to the amino acid/polyamine transporter 2 family. SdaC/TdcC subfamily.

The protein resides in the cell inner membrane. It carries out the reaction L-threonine(in) + H(+)(in) = L-threonine(out) + H(+)(out). The enzyme catalyses L-serine(in) + H(+)(in) = L-serine(out) + H(+)(out). Involved in the import of threonine and serine into the cell, with the concomitant import of a proton (symport system). The sequence is that of Threonine/serine transporter TdcC from Yersinia enterocolitica serotype O:8 / biotype 1B (strain NCTC 13174 / 8081).